Reading from the N-terminus, the 55-residue chain is Large ribosomal subunit protein bL33 (55 aa).

Belongs to the bacterial ribosomal protein bL33 family.

This is Large ribosomal subunit protein bL33 from Arthrobacter sp. (strain FB24).